Here is a 205-residue protein sequence, read N- to C-terminus: MAEPLQPDPGAAEDAAAQAVETPGWKAPEDAGPQPGSYEIRHYGPAKWVSTSVESMDWDSAIQTGFTKLNSYIQGKNEKEMKIKMTAPVTSYVEPGSGPFSESTITISLYIPSEQQFDPPRPLESDVFIEDRAEMTVFVRSFDGFSSAQKNQEQLLTLASILREDGKVFDEKVYYTAGYNSPVKLLNRNNEVWLIQKNEPTKENE.

The tract at residues 1–39 (MAEPLQPDPGAAEDAAAQAVETPGWKAPEDAGPQPGSYE) is disordered. An N-acetylalanine modification is found at A2. Phosphoserine is present on S181.

It belongs to the HEBP family. Monomer. Interacts with LRPPRC. May interact with BCL2L1; an interaction with BCL2L1 was observed using a peptide, but not with the full-length protein. The full-length protein would have to undergo a major conformation change for the interaction to occur. Interacts with PDCD6. Detected in placenta.

It localises to the cytoplasm. The protein localises to the mitochondrion. Its function is as follows. Can promote mitochondrial permeability transition and facilitate necrotic cell death under different types of stress conditions. In Homo sapiens (Human), this protein is Heme-binding protein 2 (HEBP2).